Reading from the N-terminus, the 187-residue chain is Elongation factor P (187 aa).

Belongs to the elongation factor P family.

Its subcellular location is the cytoplasm. It functions in the pathway protein biosynthesis; polypeptide chain elongation. In terms of biological role, involved in peptide bond synthesis. Stimulates efficient translation and peptide-bond synthesis on native or reconstituted 70S ribosomes in vitro. Probably functions indirectly by altering the affinity of the ribosome for aminoacyl-tRNA, thus increasing their reactivity as acceptors for peptidyl transferase. The protein is Elongation factor P of Helicobacter hepaticus (strain ATCC 51449 / 3B1).